Consider the following 100-residue polypeptide: Small ribosomal subunit protein uS14c (100 aa).

It belongs to the universal ribosomal protein uS14 family. Part of the 30S ribosomal subunit.

Its subcellular location is the plastid. The protein localises to the chloroplast. In terms of biological role, binds 16S rRNA, required for the assembly of 30S particles. This chain is Small ribosomal subunit protein uS14c, found in Porphyra purpurea (Red seaweed).